Consider the following 205-residue polypeptide: Holliday junction branch migration complex subunit RuvA (205 aa).

The tract at residues 1-64 is domain I; that stretch reads MIGRLRGIIL…EDAQLLFGFN (64 aa). The domain II stretch occupies residues 65 to 143; the sequence is DKQERALFRE…GLSGDLFNSV (79 aa). Residues 144–156 are flexible linker; the sequence is SDIPLTSPANVDN. A domain III region spans residues 157 to 205; that stretch reads RVGEPEAEAAAALVALGYKPQEASRMISKIARPDADCETLIRDALRAAL.

Belongs to the RuvA family. In terms of assembly, homotetramer. Forms an RuvA(8)-RuvB(12)-Holliday junction (HJ) complex. HJ DNA is sandwiched between 2 RuvA tetramers; dsDNA enters through RuvA and exits via RuvB. An RuvB hexamer assembles on each DNA strand where it exits the tetramer. Each RuvB hexamer is contacted by two RuvA subunits (via domain III) on 2 adjacent RuvB subunits; this complex drives branch migration. In the full resolvosome a probable DNA-RuvA(4)-RuvB(12)-RuvC(2) complex forms which resolves the HJ.

The protein resides in the cytoplasm. The RuvA-RuvB-RuvC complex processes Holliday junction (HJ) DNA during genetic recombination and DNA repair, while the RuvA-RuvB complex plays an important role in the rescue of blocked DNA replication forks via replication fork reversal (RFR). RuvA specifically binds to HJ cruciform DNA, conferring on it an open structure. The RuvB hexamer acts as an ATP-dependent pump, pulling dsDNA into and through the RuvAB complex. HJ branch migration allows RuvC to scan DNA until it finds its consensus sequence, where it cleaves and resolves the cruciform DNA. This chain is Holliday junction branch migration complex subunit RuvA, found in Pectobacterium atrosepticum (strain SCRI 1043 / ATCC BAA-672) (Erwinia carotovora subsp. atroseptica).